We begin with the raw amino-acid sequence, 528 residues long: Beta-hexosaminidase subunit alpha (528 aa).

The first 22 residues, 1-22 (MAGCRLWVSLLLAAALACLATA), serve as a signal peptide directing secretion. A propeptide spanning residues 23 to 88 (LWPWPQYIQT…PRPSFSKKQQ (66 aa)) is cleaved from the precursor. Cys-58 and Cys-104 are joined by a disulfide. 3 N-linked (GlcNAc...) asparagine glycosylation sites follow: Asn-115, Asn-157, and Asn-295. A disulfide bond links Cys-277 and Cys-328. The active-site Proton donor is the Glu-323. Residues 422 to 423 (NR) form a critical for hydrolysis GM2 gangliosides region. N-linked (GlcNAc...) asparagine glycosylation occurs at Asn-487. A disulfide bond links Cys-504 and Cys-521.

Belongs to the glycosyl hydrolase 20 family. There are 3 beta-hexosaminidase isozymes: isozyme A (hexosaminidase A) is a heterodimer composed of one subunit alpha and one subunit beta (chain A and B); isozyme B (hexosaminidase B) is a homodimer of two beta subunits (two chains A and B); isozyme S (hexosaminidase S) is a homodimer of two alpha subunits. The composition of the dimer (isozyme A versus isozyme S) has a significant effect on the substrate specificity of the alpha subunit active site.

Its subcellular location is the lysosome. It carries out the reaction Hydrolysis of terminal non-reducing N-acetyl-D-hexosamine residues in N-acetyl-beta-D-hexosaminides.. The catalysed reaction is N-acetyl-beta-D-galactosaminyl-(1-&gt;4)-beta-D-3-sulfogalactosyl-(1-&gt;4)-beta-D-glucosyl-(1&lt;-&gt;1')-ceramide + H2O = a beta-D-3-sulfogalactosyl-(1-&gt;4)-beta-D-glucosyl-(1&lt;-&gt;1')-ceramide + N-acetyl-beta-D-galactosamine. It catalyses the reaction a ganglioside GM2 (d18:1(4E)) + H2O = a ganglioside GM3 (d18:1(4E)) + N-acetyl-beta-D-galactosamine. The enzyme catalyses a ganglioside GM2 + H2O = a ganglioside GM3 + N-acetyl-beta-D-galactosamine. It carries out the reaction beta-D-GalNAc-(1-&gt;4)-alpha-L-IdoA-(1-&gt;3)-beta-D-GalNAc-4-sulfate-(1-&gt;4)-alpha-L-IdoA-(1-&gt;3)-D-GalNAc-4-sulfate + H2O = alpha-L-IdoA-(1-&gt;3)-beta-D-GalNAc-4-sulfate-(1-&gt;4)-alpha-L-IdoA-(1-&gt;3)-D-GalNAc-4-sulfate + N-acetyl-D-galactosamine. The catalysed reaction is N-acetyl-beta-D-6-sulfogalactosaminyl-(1-&gt;4)-alpha-L-iduronyl-(1-&gt;3)-N-acetyl-D-6-sulfogalactosamine + H2O = alpha-L-iduronyl-(1-&gt;3)-N-acetyl-D-6-sulfogalactosamine + N-acetyl-D-6-sulfogalactosamine. Addition of GM2A stimulates the hydrolysis of sulfated glycosphingolipid SM2 and the ganglioside GM2. Hydrolyzes the non-reducing end N-acetyl-D-hexosamine and/or sulfated N-acetyl-D-hexosamine of glycoconjugates, such as the oligosaccharide moieties from proteins and neutral glycolipids, or from certain mucopolysaccharides. The isozyme S is as active as the isozyme A on the anionic bis-sulfated glycans, the chondroitin-6-sulfate trisaccharide (C6S-3), and the dermatan sulfate pentasaccharide, and the sulfated glycosphingolipid SM2. The isozyme B does not hydrolyze each of these substrates, however hydrolyzes efficiently neutral oligosaccharide. Only the isozyme A is responsible for the degradation of GM2 gangliosides in the presence of GM2A. The polypeptide is Beta-hexosaminidase subunit alpha (Rattus norvegicus (Rat)).